The following is a 514-amino-acid chain: 2-isopropylmalate synthase (514 aa).

The Pyruvate carboxyltransferase domain maps to 5 to 267 (IYIFDTTLRD…HTDIVTEEIT (263 aa)). Residues Asp14, His202, His204, and Asn238 each coordinate Mn(2+). The interval 392–514 (KLKYYQVFTG…SKDLQKISAN (123 aa)) is regulatory domain.

It belongs to the alpha-IPM synthase/homocitrate synthase family. LeuA type 1 subfamily. Homodimer. Mn(2+) serves as cofactor.

Its subcellular location is the cytoplasm. It carries out the reaction 3-methyl-2-oxobutanoate + acetyl-CoA + H2O = (2S)-2-isopropylmalate + CoA + H(+). The protein operates within amino-acid biosynthesis; L-leucine biosynthesis; L-leucine from 3-methyl-2-oxobutanoate: step 1/4. Its function is as follows. Catalyzes the condensation of the acetyl group of acetyl-CoA with 3-methyl-2-oxobutanoate (2-ketoisovalerate) to form 3-carboxy-3-hydroxy-4-methylpentanoate (2-isopropylmalate). The chain is 2-isopropylmalate synthase from Clostridium kluyveri (strain NBRC 12016).